We begin with the raw amino-acid sequence, 476 residues long: Glutamate--tRNA ligase (476 aa).

Positions 9 to 19 match the 'HIGH' region motif; the sequence is PSPTGTLHLGT. Residues 248–252 carry the 'KMSKS' region motif; sequence KLSKR. Lysine 251 serves as a coordination point for ATP.

Belongs to the class-I aminoacyl-tRNA synthetase family. Glutamate--tRNA ligase type 1 subfamily. As to quaternary structure, monomer.

The protein localises to the cytoplasm. The catalysed reaction is tRNA(Glu) + L-glutamate + ATP = L-glutamyl-tRNA(Glu) + AMP + diphosphate. Functionally, catalyzes the attachment of glutamate to tRNA(Glu) in a two-step reaction: glutamate is first activated by ATP to form Glu-AMP and then transferred to the acceptor end of tRNA(Glu). The chain is Glutamate--tRNA ligase from Prochlorococcus marinus (strain NATL2A).